Reading from the N-terminus, the 509-residue chain is Butyrophilin-like protein 1 (509 aa).

Positions 1-27 (MMKGSPSVPPAGCLLPLLLLLFTGVSG) are cleaved as a signal peptide. Ig-like V-type domains lie at 28–139 (EVSW…QEVS) and 151–237 (PLVH…KAIL). At 28–250 (EVSWFSVKGP…PFFPKTCPWK (223 aa)) the chain is on the extracellular side. 2 disulfides stabilise this stretch: Cys53–Cys127 and Cys167–Cys221. A helical membrane pass occupies residues 251–271 (VALVCSVLILLVLLGGISLGI). Over 272 to 509 (WKEHQVKRRE…SMGLSATAQP (238 aa)) the chain is Cytoplasmic. Residues 316–509 (RKALYKEDWK…SMGLSATAQP (194 aa)) enclose the B30.2/SPRY domain. The disordered stretch occupies residues 349–372 (MPDQDKTDSRTEENRGEETVSSSQ). Positions 351–366 (DQDKTDSRTEENRGEE) are enriched in basic and acidic residues.

It belongs to the immunoglobulin superfamily. BTN/MOG family.

It localises to the membrane. The polypeptide is Butyrophilin-like protein 1 (Btnl1) (Mus musculus (Mouse)).